A 247-amino-acid chain; its full sequence is Ribosomal RNA small subunit methyltransferase G (247 aa).

S-adenosyl-L-methionine contacts are provided by residues G84, F89, 136–137, and R155; that span reads AE.

The protein belongs to the methyltransferase superfamily. RNA methyltransferase RsmG family.

It is found in the cytoplasm. Functionally, specifically methylates the N7 position of a guanine in 16S rRNA. This chain is Ribosomal RNA small subunit methyltransferase G, found in Prochlorococcus marinus (strain MIT 9303).